The chain runs to 364 residues: MPHPYPALTPEQKKELSDIAHRIVAPGKGILAADESTGSIAKRLQSIGTENTEENRRFYRQLLLTADDRVNPCIGGVILFHETLYQKADDGRPFPQVIKSKGGVVGIKVDKGVVPLAGTNGETTTQGLDGLSERCAQYKKDGADFAKWRCVLKIGEHTPSALAIMENANVLARYASICQQNGIVPIVEPEILPDGDHDLKRCQYVTEKVLAAVYKALSDHHVYLEGTLLKPNMVTPGHACTQKFSNEEIAMATVTALRRTVPPAVTGVTFLSGGQSEEEASINLNAINKCPLLKPWALTFSYGRALQASALKAWGGKKENLKAAQEEYIKRALANSLACQGKYTPSGQSGAAASESLFISNHAY.

Y5 carries the phosphotyrosine modification. Residue T9 is modified to Phosphothreonine. Residues S36 and S39 each carry the phosphoserine modification. N6-acetyllysine; alternate is present on K42. A Glycyl lysine isopeptide (Lys-Gly) (interchain with G-Cter in SUMO1); alternate cross-link involves residue K42. K42 is covalently cross-linked (Glycyl lysine isopeptide (Lys-Gly) (interchain with G-Cter in SUMO2); alternate). Position 43 (R43) interacts with beta-D-fructose 1,6-bisphosphate. Position 46 is a phosphoserine (S46). K99 carries the N6-(2-hydroxyisobutyryl)lysine modification. K108 is subject to N6-acetyllysine. K111 carries the N6-acetyllysine; alternate modification. Position 111 is an N6-malonyllysine; alternate (K111). The residue at position 132 (S132) is a Phosphoserine. An N6-(2-hydroxyisobutyryl)lysine modification is found at K147. E188 functions as the Proton acceptor in the catalytic mechanism. K230 (schiff-base intermediate with dihydroxyacetone-P) is an active-site residue. S272 is modified (phosphoserine). Residues 272–274, S301, and R304 contribute to the beta-D-fructose 1,6-bisphosphate site; that span reads SGG. K312 bears the N6-malonyllysine mark. At K330 the chain carries N6-acetyllysine.

This sequence belongs to the class I fructose-bisphosphate aldolase family. As to quaternary structure, homotetramer. Interacts with SNX9 and WAS. Interacts with FBP2; the interaction blocks FBP2 inhibition by physiological concentrations of AMP and reduces inhibition by Ca(2+).

The protein resides in the cytoplasm. It localises to the myofibril. Its subcellular location is the sarcomere. The protein localises to the i band. It is found in the m line. The enzyme catalyses beta-D-fructose 1,6-bisphosphate = D-glyceraldehyde 3-phosphate + dihydroxyacetone phosphate. The protein operates within carbohydrate degradation; glycolysis; D-glyceraldehyde 3-phosphate and glycerone phosphate from D-glucose: step 4/4. Functionally, catalyzes the reversible conversion of beta-D-fructose 1,6-bisphosphate (FBP) into two triose phosphate and plays a key role in glycolysis and gluconeogenesis. In addition, may also function as scaffolding protein. This chain is Fructose-bisphosphate aldolase A (Aldoa), found in Mus musculus (Mouse).